We begin with the raw amino-acid sequence, 645 residues long: 1,4-alpha-glucan branching enzyme GlgB (645 aa).

Residue Asp-309 is the Nucleophile of the active site. Catalysis depends on Glu-352, which acts as the Proton donor. Residues 619-645 (VKTRKGSKKQDGSKTKVRSNVTSRGKR) form a disordered region. Over residues 636 to 645 (RSNVTSRGKR) the composition is skewed to polar residues.

The protein belongs to the glycosyl hydrolase 13 family. GlgB subfamily. Monomer.

The catalysed reaction is Transfers a segment of a (1-&gt;4)-alpha-D-glucan chain to a primary hydroxy group in a similar glucan chain.. It functions in the pathway glycan biosynthesis; glycogen biosynthesis. Catalyzes the formation of the alpha-1,6-glucosidic linkages in glycogen by scission of a 1,4-alpha-linked oligosaccharide from growing alpha-1,4-glucan chains and the subsequent attachment of the oligosaccharide to the alpha-1,6 position. The protein is 1,4-alpha-glucan branching enzyme GlgB of Bacillus cereus (strain ATCC 14579 / DSM 31 / CCUG 7414 / JCM 2152 / NBRC 15305 / NCIMB 9373 / NCTC 2599 / NRRL B-3711).